The sequence spans 194 residues: Mitochondrial import inner membrane translocase subunit Tim22 (194 aa).

2 disulfides stabilise this stretch: Cys-69-Cys-141 and Cys-160-Cys-179. The next 3 membrane-spanning stretches (helical) occupy residues Ala-74–Ile-94, Met-123–Val-143, and Ala-170–Asp-190.

The protein belongs to the Tim17/Tim22/Tim23 family. Component of the TIM22 complex, whose core is composed of TIMM22, associated with peripheral protein FXC1/TIMM10B and the 70 kDa heterohexamer. In most cases, the 70 kDa complex is composed of TIMM9 and TIMM10 (TIMM10A or TIMM10B). A small fraction of the 70 kDa complex is composed of TIMM8 (TIMM8A/DDP1 or TIMM8B/DDP2) and TIMM13. The TIM22 complex also contains AGK and TIMM29. Interacts directly with TIMM9, TIMM10A and FXC1/TIMM10B. Interacts (when oxidized) with TIMM29; interaction is direct. Disulfide bonds promote efficient assembly of the TIM22 complex.

It is found in the mitochondrion inner membrane. Functionally, essential core component of the TIM22 complex, a complex that mediates the import and insertion of multi-pass transmembrane proteins into the mitochondrial inner membrane. In the TIM22 complex, it constitutes the voltage-activated and signal-gated channel. Forms a twin-pore translocase that uses the membrane potential as external driving force in 2 voltage-dependent steps. The protein is Mitochondrial import inner membrane translocase subunit Tim22 (TIMM22) of Bos taurus (Bovine).